The chain runs to 187 residues: Elongation factor P (187 aa).

Lys34 is subject to N6-(3,6-diaminohexanoyl)-5-hydroxylysine.

It belongs to the elongation factor P family. Post-translationally, may be beta-lysylated on the epsilon-amino group of Lys-34 by the combined action of EpmA and EpmB, and then hydroxylated on the C5 position of the same residue by EpmC (if this protein is present). Lysylation is critical for the stimulatory effect of EF-P on peptide-bond formation. The lysylation moiety may extend toward the peptidyltransferase center and stabilize the terminal 3-CCA end of the tRNA. Hydroxylation of the C5 position on Lys-34 may allow additional potential stabilizing hydrogen-bond interactions with the P-tRNA.

Its subcellular location is the cytoplasm. It functions in the pathway protein biosynthesis; polypeptide chain elongation. Its function is as follows. Involved in peptide bond synthesis. Alleviates ribosome stalling that occurs when 3 or more consecutive Pro residues or the sequence PPG is present in a protein, possibly by augmenting the peptidyl transferase activity of the ribosome. Modification of Lys-34 is required for alleviation. This is Elongation factor P from Thioalkalivibrio sulfidiphilus (strain HL-EbGR7).